A 423-amino-acid polypeptide reads, in one-letter code: AUGMIN subunit 4 (423 aa).

Positions 267–287 form a coiled coil; sequence IEEIERDEAALREDLYSADRK.

It belongs to the HAUS4 family. Part of the augmin complex composed of 8 subunits. The complex acts on microtubules and interacts with gamma-tubulin in spindles and the phragmoplast.

It localises to the cytoplasm. It is found in the cytoskeleton. The protein localises to the spindle. Its subcellular location is the phragmoplast. Functionally, involved in microtubules reorganization during spindle and phragmoplast development. The sequence is that of AUGMIN subunit 4 (AUG4) from Arabidopsis thaliana (Mouse-ear cress).